Consider the following 212-residue polypeptide: Cytidylate kinase (212 aa).

7–15 (GPAASGKGT) is a binding site for ATP.

This sequence belongs to the cytidylate kinase family. Type 1 subfamily.

It is found in the cytoplasm. It carries out the reaction CMP + ATP = CDP + ADP. It catalyses the reaction dCMP + ATP = dCDP + ADP. The protein is Cytidylate kinase of Rhodopseudomonas palustris (strain HaA2).